The following is a 252-amino-acid chain: Triosephosphate isomerase (252 aa).

A substrate-binding site is contributed by 10–12 (NWK). H96 acts as the Electrophile in catalysis. E168 serves as the catalytic Proton acceptor. Substrate-binding positions include G174, S214, and 235-236 (GG).

Belongs to the triosephosphate isomerase family. As to quaternary structure, homodimer.

Its subcellular location is the cytoplasm. The catalysed reaction is D-glyceraldehyde 3-phosphate = dihydroxyacetone phosphate. Its pathway is carbohydrate biosynthesis; gluconeogenesis. It participates in carbohydrate degradation; glycolysis; D-glyceraldehyde 3-phosphate from glycerone phosphate: step 1/1. Functionally, involved in the gluconeogenesis. Catalyzes stereospecifically the conversion of dihydroxyacetone phosphate (DHAP) to D-glyceraldehyde-3-phosphate (G3P). The protein is Triosephosphate isomerase of Streptococcus pyogenes serotype M18 (strain MGAS8232).